Consider the following 944-residue polypeptide: Leucine--tRNA ligase 2 (944 aa).

Residues 36-46 (PYPNSPFHLGH) carry the 'HIGH' region motif. The 'KMSKS' region signature appears at 621-625 (KMSKS). ATP is bound at residue Lys-624.

Belongs to the class-I aminoacyl-tRNA synthetase family.

It localises to the cytoplasm. The catalysed reaction is tRNA(Leu) + L-leucine + ATP = L-leucyl-tRNA(Leu) + AMP + diphosphate. This Sulfurisphaera tokodaii (strain DSM 16993 / JCM 10545 / NBRC 100140 / 7) (Sulfolobus tokodaii) protein is Leucine--tRNA ligase 2.